The sequence spans 138 residues: Calmodulin-beta (138 aa).

EF-hand domains are found at residues 1–32 (EFKE…LGQN), 33–68 (PTEA…KMKE), 70–105 (DSEE…LGEK), and 106–138 (LTDE…MTSK). Positions 10, 12, 14, 16, 21, 46, 48, 50, 52, 57, 83, 85, 87, 94, 119, 121, 123, 125, and 130 each coordinate Ca(2+).

This sequence belongs to the calmodulin family.

In terms of biological role, calmodulin mediates the control of a large number of enzymes, ion channels and other proteins by Ca(2+). Among the enzymes to be stimulated by the calmodulin-Ca(2+) complex are a number of protein kinases and phosphatases. This chain is Calmodulin-beta, found in Arbacia punctulata (Punctuate sea urchin).